Consider the following 315-residue polypeptide: Beta-carotene hydroxylase 1, chloroplastic (315 aa).

The N-terminal 58 residues, 1–58 (MAAEISISASSRAICLQRNPFPAPKYFATAPPLLFFSPLTCNLDAILRSRRKPRLAAC), are a transit peptide targeting the chloroplast. The next 2 membrane-spanning stretches (helical) occupy residues 112-132 (YLVAAVMSSLGITSMAVISVY) and 146-166 (FSEMFCTFALAFGAAIGMEYW). The Fatty acid hydroxylase domain occupies 159–286 (AAIGMEYWAR…KFDGVPYGLF (128 aa)). Residues 171–176 (HRALWH) carry the Histidine box-1 motif. The short motif at 183–187 (HESHH) is the Histidine box-2 element. Helical transmembrane passes span 196 to 216 (LNDIFAIINAVPAIALLSFGF) and 222 to 242 (IPGLCFGAGLGITVFGMAYMF). The Histidine box-3 motif lies at 244-249 (HDGLVH). Residues 270–274 (HQLHH) carry the Histidine box-4 motif.

This sequence belongs to the sterol desaturase family.

The protein resides in the plastid. It localises to the chloroplast membrane. The catalysed reaction is all-trans-beta-carotene + 4 reduced [2Fe-2S]-[ferredoxin] + 2 O2 + 4 H(+) = all-trans-zeaxanthin + 4 oxidized [2Fe-2S]-[ferredoxin] + 2 H2O. It catalyses the reaction all-trans-beta-carotene + 2 reduced [2Fe-2S]-[ferredoxin] + O2 + 2 H(+) = beta-cryptoxanthin + 2 oxidized [2Fe-2S]-[ferredoxin] + H2O. The enzyme catalyses beta-cryptoxanthin + 2 reduced [2Fe-2S]-[ferredoxin] + O2 + 2 H(+) = all-trans-zeaxanthin + 2 oxidized [2Fe-2S]-[ferredoxin] + H2O. With respect to regulation, inhibited by o-phenanthroline and 8-hydroxyquinoline. Functionally, nonheme diiron monooxygenase involved in the biosynthesis of xanthophylls. Specific for beta-ring hydroxylations of beta-carotene. Produces beta-cryptoxanthin and zeaxanthin. Uses ferredoxin as an electron donor. The protein is Beta-carotene hydroxylase 1, chloroplastic of Capsicum annuum (Capsicum pepper).